The chain runs to 579 residues: Matrix metalloproteinase-C (579 aa).

The N-terminal stretch at 1 to 17 is a signal peptide; sequence MRLIYVIAILLVSTCQA. The propeptide at 18 to 129 is activation peptide; the sequence is GFFSSLVSRF…SRCGVTDAPL (112 aa). The tract at residues 32–51 is disordered; the sequence is NSSPSSSSSSSSFSNSRKPS. Positions 33–50 are enriched in low complexity; that stretch reads SSPSSSSSSSSFSNSRKP. Positions 120–127 match the Cysteine switch motif; the sequence is SRCGVTDA. 5 residues coordinate Zn(2+): Cys122, His200, Asp202, His215, and His225. N-linked (GlcNAc...) asparagine glycosylation is present at Asn231. A Zn(2+)-binding site is contributed by His254. Glu255 is a catalytic residue. Positions 258 and 264 each coordinate Zn(2+). A disordered region spans residues 307–394; sequence SGRSSSGSDF…SSSGSSGGGC (88 aa). Positions 315–324 are enriched in gly residues; that stretch reads DFGGSSGGGS. Residues 325 to 341 are compositionally biased toward low complexity; it reads RTTARPTTTTRSWFGRF. Positions 373 to 394 are enriched in gly residues; sequence WGSGSGSSGRGGSSSGSSGGGC. Hemopexin repeat units follow at residues 395–437 and 438–490; these read PSHI…FPSA and PTPV…LGFS.

The protein belongs to the peptidase M10A family. The cofactor is Zn(2+).

The protein resides in the secreted. It is found in the extracellular space. The protein localises to the extracellular matrix. With respect to regulation, inhibited by human TIMP1 and TIMP2 and the broad MMP inhibitors BB94 (Batimastat) and CT543. Metalloproteinase. The protein is Matrix metalloproteinase-C of Caenorhabditis elegans.